The following is a 197-amino-acid chain: RING-H2 finger protein ATL80 (197 aa).

The chain crosses the membrane as a helical span at residues 30 to 50 (LVVILAALLCALICVLGLIAV). The segment at 111 to 153 (CAICLAEFSAGDELRVLPQCGHGFHVACIDTWLGSHSSCPSCR) adopts an RING-type; atypical zinc-finger fold. Residues 168 to 197 (PGSSSSGLESEPEIEIRIKQGEDDPNSFLP) are disordered.

The protein belongs to the RING-type zinc finger family. ATL subfamily.

The protein resides in the membrane. The catalysed reaction is S-ubiquitinyl-[E2 ubiquitin-conjugating enzyme]-L-cysteine + [acceptor protein]-L-lysine = [E2 ubiquitin-conjugating enzyme]-L-cysteine + N(6)-ubiquitinyl-[acceptor protein]-L-lysine.. The protein operates within protein modification; protein ubiquitination. May be involved in the early steps of the plant defense signaling pathway. The chain is RING-H2 finger protein ATL80 (ATL80) from Arabidopsis thaliana (Mouse-ear cress).